We begin with the raw amino-acid sequence, 631 residues long: Probable G-protein coupled receptor 153 (631 aa).

The Extracellular segment spans residues 1-11 (MSDERRLPSSA). A helical transmembrane segment spans residues 12 to 32 (VGWLACGGLSLLANAWGILSV). Residues 33–41 (GAKQKKWKP) are Cytoplasmic-facing. A helical membrane pass occupies residues 42-62 (LEFLLCTLAATHMLNVAVPIA). At 63 to 84 (TYAVVQLRRQRPDYEWNEGLCK) the chain is on the extracellular side. A helical transmembrane segment spans residues 85 to 105 (VFVSTFYTLTLATCFSVTSIS). At 106-126 (YHRMWMVRWPVNYRLSNAKKQ) the chain is on the cytoplasmic side. The chain crosses the membrane as a helical span at residues 127–147 (AVHTVMGIWMVSFILSALPAV). The Extracellular portion of the chain corresponds to 148–162 (GWHDTSERFYTHGCR). A helical membrane pass occupies residues 163 to 183 (FIVAEIGLGFGVCFLLLVGGS). Residues 184-243 (VAMGMVCTAIALFQTLATQVGHRADRRTFTVPTIVVEDAQGKRRSSIDGSEPARTSLQIT) lie on the Cytoplasmic side of the membrane. Residues 244-264 (GLVATIVVIYDCLMGFPVLVV) form a helical membrane-spanning segment. Over 265 to 276 (SFSSLRADASAP) the chain is Extracellular. The helical transmembrane segment at 277 to 297 (WMALCVLWCSVTQALLLPLFL) threads the bilayer. Over 298-631 (WTCDRYRADL…LHSDSLGSAS (334 aa)) the chain is Cytoplasmic. 3 disordered regions span residues 486 to 518 (LQPSSLDGGPRHAQDSPPGSPRRRPGPGARSAS), 546 to 590 (QPFP…SLSA), and 603 to 631 (CGSISSFLSSPSESSGYVTLHSDSLGSAS). The segment covering 605–617 (SISSFLSSPSESS) has biased composition (low complexity).

This sequence belongs to the G-protein coupled receptor 1 family.

It is found in the cell membrane. In terms of biological role, orphan receptor. The protein is Probable G-protein coupled receptor 153 (Gpr153) of Mus musculus (Mouse).